The chain runs to 275 residues: Large ribosomal subunit protein uL2 (275 aa).

Residues 225 to 275 (MNPVDHPHGGGEGRSPIGRPPVTPWGKPALGTRTRNKKKASSKLIVKRRTK) form a disordered region. Residues 258–275 (TRNKKKASSKLIVKRRTK) are compositionally biased toward basic residues.

Belongs to the universal ribosomal protein uL2 family. In terms of assembly, part of the 50S ribosomal subunit. Forms a bridge to the 30S subunit in the 70S ribosome.

Its function is as follows. One of the primary rRNA binding proteins. Required for association of the 30S and 50S subunits to form the 70S ribosome, for tRNA binding and peptide bond formation. It has been suggested to have peptidyltransferase activity; this is somewhat controversial. Makes several contacts with the 16S rRNA in the 70S ribosome. The sequence is that of Large ribosomal subunit protein uL2 from Desulforudis audaxviator (strain MP104C).